The chain runs to 558 residues: 5-aminolevulinate synthase, mitochondrial (558 aa).

The transit peptide at 1-25 (MERVVKLAAKHCPFVSKADPSALRR) directs the protein to the mitochondrion. The tract at residues 103–124 (TTTPVTKKHQMPKHYASDLNGV) is disordered. Substrate contacts are provided by Arg152, Ser265, and Lys284. Pyridoxal 5'-phosphate-binding residues include Ser317, His345, and Thr374. Residue Lys377 is part of the active site. Lys377 carries the post-translational modification N6-(pyridoxal phosphate)lysine. Residues Thr406 and Thr407 each contribute to the pyridoxal 5'-phosphate site. Thr492 is a binding site for substrate.

This sequence belongs to the class-II pyridoxal-phosphate-dependent aminotransferase family. As to quaternary structure, homodimer. Requires pyridoxal 5'-phosphate as cofactor.

Its subcellular location is the mitochondrion matrix. It carries out the reaction succinyl-CoA + glycine + H(+) = 5-aminolevulinate + CO2 + CoA. The protein operates within porphyrin-containing compound metabolism; protoporphyrin-IX biosynthesis; 5-aminolevulinate from glycine: step 1/1. In terms of biological role, catalyzes the synthesis of 5-aminolevulinate (ALA) from succinyl-CoA and glycine, the first and rate-limiting step in heme biosynthesis. The protein is 5-aminolevulinate synthase, mitochondrial of Schizosaccharomyces pombe (strain 972 / ATCC 24843) (Fission yeast).